The chain runs to 264 residues: Thiazole synthase (264 aa).

The Schiff-base intermediate with DXP role is filled by Lys106. Residues Gly167, 193–194 (AG), and 215–216 (NT) each bind 1-deoxy-D-xylulose 5-phosphate.

This sequence belongs to the ThiG family. In terms of assembly, homotetramer. Forms heterodimers with either ThiH or ThiS.

Its subcellular location is the cytoplasm. The catalysed reaction is [ThiS sulfur-carrier protein]-C-terminal-Gly-aminoethanethioate + 2-iminoacetate + 1-deoxy-D-xylulose 5-phosphate = [ThiS sulfur-carrier protein]-C-terminal Gly-Gly + 2-[(2R,5Z)-2-carboxy-4-methylthiazol-5(2H)-ylidene]ethyl phosphate + 2 H2O + H(+). It participates in cofactor biosynthesis; thiamine diphosphate biosynthesis. Catalyzes the rearrangement of 1-deoxy-D-xylulose 5-phosphate (DXP) to produce the thiazole phosphate moiety of thiamine. Sulfur is provided by the thiocarboxylate moiety of the carrier protein ThiS. In vitro, sulfur can be provided by H(2)S. The polypeptide is Thiazole synthase (Xanthomonas campestris pv. campestris (strain 8004)).